The sequence spans 1127 residues: Nck-associated protein 1-like (1127 aa).

The interval 638–670 (KAKNKKTRKQRQTPRKGEPERDKPGAESHRKNR) is disordered. Residues 639–651 (AKNKKTRKQRQTP) show a composition bias toward basic residues. Residues 652 to 666 (RKGEPERDKPGAESH) are compositionally biased toward basic and acidic residues. The helical transmembrane segment at 996–1016 (VACLLLIFLAVSLPLLATDPS) threads the bilayer.

It belongs to the HEM-1/HEM-2 family. As to quaternary structure, in hematopoietic cells, component of the WAVE2 complex composed of ABI1, CYFIP1/SRA1, NCKAP1L/HEM1 and WASF2/WAVE2. Interacts with ARHGAP4, PIK3C3/VPS34 and PPP1R12A/MYPT1. Interacts with mammalian target of rapamycin complex 2 (mTORC2) components, including MTOR and RICTOR. In terms of tissue distribution, expressed only in cells of hematopoietic origin. Expressed in neutrophils (at protein level). Expressed in T-cells (at protein level).

Its subcellular location is the cell membrane. It is found in the cytoplasm. Its function is as follows. Essential hematopoietic-specific regulator of the actin cytoskeleton. Controls lymphocyte development, activation, proliferation and homeostasis, erythrocyte membrane stability, as well as phagocytosis and migration by neutrophils and macrophages. Component of the WAVE2 complex which signals downstream of RAC to stimulate F-actin polymerization. Required for stabilization and/or translation of the WAVE2 complex proteins in hematopoietic cells. Within the WAVE2 complex, enables the cortical actin network to restrain excessive degranulation and granule release by T-cells. Required for efficient T-lymphocyte and neutrophil migration. Exhibits complex cycles of activation and inhibition to generate waves of propagating the assembly with actin. Also involved in mechanisms WAVE-independent to regulate myosin and actin polymerization during neutrophil chemotaxis. In T-cells, required for proper mechanistic target of rapamycin complex 2 (mTORC2)-dependent AKT phosphorylation, cell proliferation and cytokine secretion, including that of IL2 and TNF. In Homo sapiens (Human), this protein is Nck-associated protein 1-like.